The primary structure comprises 221 residues: Urease accessory protein UreF (221 aa).

It belongs to the UreF family. As to quaternary structure, ureD, UreF and UreG form a complex that acts as a GTP-hydrolysis-dependent molecular chaperone, activating the urease apoprotein by helping to assemble the nickel containing metallocenter of UreC. The UreE protein probably delivers the nickel.

Its subcellular location is the cytoplasm. Required for maturation of urease via the functional incorporation of the urease nickel metallocenter. The chain is Urease accessory protein UreF from Aliivibrio fischeri (strain MJ11) (Vibrio fischeri).